The following is a 298-amino-acid chain: Acetate permease A (298 aa).

The segment at 1–43 (MSAEQNHGLEKDVGGPAAPAAAAPNAPAAAPGAPPAGMSAEEH) is disordered. Low complexity predominate over residues 14–37 (GGPAAPAAAAPNAPAAAPGAPPAG). The next 6 membrane-spanning stretches (helical) occupy residues 86–106 (APLG…INMG), 115–135 (IVIA…GMWE), 146–166 (ALSS…PGGF), 185–205 (SFGL…FCTL), 210–230 (AFFL…VGYI), and 245–265 (AGGF…LAGI).

Belongs to the acetate uptake transporter (AceTr) (TC 2.A.96) family.

It is found in the cell membrane. Its subcellular location is the vacuole membrane. In terms of biological role, high affinity monocarboxylate transporter (MCT) involved in acetate uptake. Unlike other activities involved in acetate utilization, acpA is dispensable for growth on the acetate precursor ethanol. This is Acetate permease A from Emericella nidulans (strain FGSC A4 / ATCC 38163 / CBS 112.46 / NRRL 194 / M139) (Aspergillus nidulans).